The following is a 108-amino-acid chain: Ig kappa chain V region 120 (108 aa).

A framework-1 region spans residues alanine 1–cysteine 23. The complementarity-determining-1 stretch occupies residues glutamine 24–alanine 34. The tract at residues tryptophan 35 to tyrosine 49 is framework-2. The tract at residues arginine 50 to serine 56 is complementarity-determining-2. The framework-3 stretch occupies residues glycine 57 to cysteine 88. The complementarity-determining-3 stretch occupies residues glutamine 89 to serine 97. The segment at phenylalanine 98–lysine 107 is framework-4.

The chain is Ig kappa chain V region 120 from Oryctolagus cuniculus (Rabbit).